Reading from the N-terminus, the 345-residue chain is MSVKIFNGEFDIPENSRSLYILVIATTDISLIPGLTVAGATPELTHFTPAADAEFLIKGKCSVINTVPVTPNGIPTPAIITRASLEFVKIPRLVVNAGSRIKPNLPLIDLGGEPGGDIRKGSLRKEVAERILNNGVSLGEEFSNSFDFLIIGESIPAGTTTAMAVLVGLGYDALDKVSSASPENPKELKKKIVYEAIKDLPSDLMGKLAKLSDPMLLGVSGIALGFKGKILLAGGTQMTAAAAIIKEFNKNKLKDIAIGTTKWIINDRSSDIIGLAKAVGIPILAAWLDFTNSKFEGLKVYEKGFVKEGVGAGGASIYAMKRGVTNEQILGKVEEIYQRITTNLM.

This sequence belongs to the UPF0284 family.

This is UPF0284 protein STK_21430 from Sulfurisphaera tokodaii (strain DSM 16993 / JCM 10545 / NBRC 100140 / 7) (Sulfolobus tokodaii).